Reading from the N-terminus, the 175-residue chain is ATP-dependent protease subunit HslV (175 aa).

Threonine 2 is an active-site residue. Alanine 159, aspartate 162, and threonine 165 together coordinate Na(+).

This sequence belongs to the peptidase T1B family. HslV subfamily. A double ring-shaped homohexamer of HslV is capped on each side by a ring-shaped HslU homohexamer. The assembly of the HslU/HslV complex is dependent on binding of ATP.

It localises to the cytoplasm. It carries out the reaction ATP-dependent cleavage of peptide bonds with broad specificity.. Its activity is regulated as follows. Allosterically activated by HslU binding. Functionally, protease subunit of a proteasome-like degradation complex believed to be a general protein degrading machinery. This chain is ATP-dependent protease subunit HslV, found in Ligilactobacillus salivarius (strain UCC118) (Lactobacillus salivarius).